Consider the following 1407-residue polypeptide: DNA-directed RNA polymerase subunit beta' (1407 aa).

Residues C70, C72, C85, and C88 each contribute to the Zn(2+) site. Residues D460, D462, and D464 each contribute to the Mg(2+) site. Residues C814, C888, C895, and C898 each contribute to the Zn(2+) site. The residue at position 972 (K972) is an N6-acetyllysine.

This sequence belongs to the RNA polymerase beta' chain family. The RNAP catalytic core consists of 2 alpha, 1 beta, 1 beta' and 1 omega subunit. When a sigma factor is associated with the core the holoenzyme is formed, which can initiate transcription. Mg(2+) serves as cofactor. The cofactor is Zn(2+).

It carries out the reaction RNA(n) + a ribonucleoside 5'-triphosphate = RNA(n+1) + diphosphate. DNA-dependent RNA polymerase catalyzes the transcription of DNA into RNA using the four ribonucleoside triphosphates as substrates. The polypeptide is DNA-directed RNA polymerase subunit beta' (Shigella flexneri serotype 5b (strain 8401)).